We begin with the raw amino-acid sequence, 355 residues long: Molybdenum import ATP-binding protein ModC (355 aa).

The ABC transporter domain maps to M1–A233. G31–T38 contacts ATP. In terms of domain architecture, Mop spans G291 to G355.

Belongs to the ABC transporter superfamily. Molybdate importer (TC 3.A.1.8) family. In terms of assembly, the complex is composed of two ATP-binding proteins (ModC), two transmembrane proteins (ModB) and a solute-binding protein (ModA).

It localises to the cell inner membrane. It catalyses the reaction molybdate(out) + ATP + H2O = molybdate(in) + ADP + phosphate + H(+). Part of the ABC transporter complex ModABC involved in molybdenum import. Responsible for energy coupling to the transport system. This is Molybdenum import ATP-binding protein ModC from Rhizobium etli (strain ATCC 51251 / DSM 11541 / JCM 21823 / NBRC 15573 / CFN 42).